Consider the following 412-residue polypeptide: Non-specific lipid-transfer protein-like 2 (412 aa).

The Microbody targeting signal signature appears at Ser410–Ile412.

The protein belongs to the thiolase-like superfamily. Thiolase family. Expressed in intestine, hypodermis and body-wall muscle.

The protein localises to the peroxisome. The enzyme catalyses choloyl-CoA + propanoyl-CoA = 3alpha,7alpha,12alpha-trihydroxy-24-oxo-5beta-cholestan-26-oyl-CoA + CoA. Inhibited by acetyl-CoA. Catalyzes the thiolytic cleavage of 3-ketoacyl-CoA with 8-16 carbon residues in the acyl group using a ping-pong mechanism whereby binding to 3-ketooctanoyl-CoA results in the release of acetyl-CoA and the subsequent addition of CoA produces 3-ketohexanohyl-CoA. Involved in the biosynthesis of the dauer pheromone by providing short chains of fatty acid that are attached to the ascarylose sugars of the pheromone. The sequence is that of Non-specific lipid-transfer protein-like 2 from Caenorhabditis elegans.